Reading from the N-terminus, the 220-residue chain is Deoxyribose-phosphate aldolase (220 aa).

Residue D89 is the Proton donor/acceptor of the active site. K151 serves as the catalytic Schiff-base intermediate with acetaldehyde. Residue K180 is the Proton donor/acceptor of the active site.

It belongs to the DeoC/FbaB aldolase family. DeoC type 1 subfamily.

Its subcellular location is the cytoplasm. It catalyses the reaction 2-deoxy-D-ribose 5-phosphate = D-glyceraldehyde 3-phosphate + acetaldehyde. It participates in carbohydrate degradation; 2-deoxy-D-ribose 1-phosphate degradation; D-glyceraldehyde 3-phosphate and acetaldehyde from 2-deoxy-alpha-D-ribose 1-phosphate: step 2/2. In terms of biological role, catalyzes a reversible aldol reaction between acetaldehyde and D-glyceraldehyde 3-phosphate to generate 2-deoxy-D-ribose 5-phosphate. The sequence is that of Deoxyribose-phosphate aldolase from Staphylococcus carnosus (strain TM300).